Reading from the N-terminus, the 362-residue chain is Endopolygalacturonase II (362 aa).

The N-terminal stretch at 1 to 21 (MHSFASLLAYGLVAGATFASA) is a signal peptide. The propeptide occupies 22–27 (SPIEAR). C30 and C45 form a disulfide bridge. The stretch at 156–186 (ANDITFTDVTINNADGDTQGGHNTDAFDVGN) is one PbH1 1 repeat. D201 (proton donor) is an active-site residue. C203 and C219 form a disulfide bridge. PbH1 repeat units lie at residues 209–229 (GENIWFTGGTCIGGHGLSIGS), 238–259 (VKNVTIEHSTVSNSENAVRIKT), 267–289 (VSEITYSNIVMSGISDYGVVIQQ), and 301–322 (TNGVTIQDVKLESVTGSVDSGA). The active site involves H223. An N-linked (GlcNAc...) (high mannose) asparagine glycan is attached at N240. 2 disulfides stabilise this stretch: C329–C334 and C353–C362.

Belongs to the glycosyl hydrolase 28 family.

Its subcellular location is the secreted. It carries out the reaction (1,4-alpha-D-galacturonosyl)n+m + H2O = (1,4-alpha-D-galacturonosyl)n + (1,4-alpha-D-galacturonosyl)m.. Functionally, involved in maceration and soft-rotting of plant tissue. Hydrolyzes the 1,4-alpha glycosidic bonds of de-esterified pectate in the smooth region of the plant cell wall. The polypeptide is Endopolygalacturonase II (pgaII) (Aspergillus niger (strain ATCC 1015 / CBS 113.46 / FGSC A1144 / LSHB Ac4 / NCTC 3858a / NRRL 328 / USDA 3528.7)).